The primary structure comprises 345 residues: Pectin lyase (345 aa).

Residues Met-1–Gly-24 form the signal peptide. Arg-234 is a catalytic residue.

Belongs to the polysaccharide lyase 1 family.

Its subcellular location is the secreted. The enzyme catalyses Eliminative cleavage of (1-&gt;4)-alpha-D-galacturonan methyl ester to give oligosaccharides with 4-deoxy-6-O-methyl-alpha-D-galact-4-enuronosyl groups at their non-reducing ends.. With respect to regulation, inhibited by Hg(2+) and Mn(2+). Not affected by EDTA in vitro. In terms of biological role, catalyzes the depolymerization of pectins of methyl esterification degree from 13 to 75%, with an endo mode of action. Cannot degrade polygalacturonate. Also displays protopectinase activity, i.e. releases pectin from protopectin. The polypeptide is Pectin lyase (pelB) (Bacillus subtilis).